A 362-amino-acid polypeptide reads, in one-letter code: Caspase activity and apoptosis inhibitor 1 (362 aa).

The span at 1–14 (MTGKKSSREKRRKR) shows a compositional bias: basic residues. 2 disordered regions span residues 1–44 (MTGK…SGCG) and 65–101 (TGGG…GSLQ). Over residues 19-32 (AAAALAAPDLVPAV) the composition is skewed to low complexity. 2 stretches are compositionally biased toward gly residues: residues 33–44 (GGSGSGSTSGCG) and 65–74 (TGGGSGGSCW). S89 bears the Phosphoserine mark. A Phosphothreonine modification is found at T90. K105 participates in a covalent cross-link: Glycyl lysine isopeptide (Lys-Gly) (interchain with G-Cter in SUMO2). Phosphoserine is present on residues S121 and S204. Disordered regions lie at residues 226 to 251 (SCVD…GKGE), 269 to 291 (GPCN…EAGQ), and 309 to 332 (LAES…DVQP). The span at 235–251 (RENKQPEGLELKQGKGE) shows a compositional bias: basic and acidic residues. A compositionally biased stretch (low complexity) spans 273–282 (EEAAAPEVPE). The stretch at 282-312 (ENTVQSEAGQIDDLEKDIEKSVNEILGLAES) forms a coiled coil. Phosphoserine is present on S313.

Its function is as follows. Anti-apoptotic protein that modulates a caspase-10 dependent mitochondrial caspase-3/9 feedback amplification loop. This is Caspase activity and apoptosis inhibitor 1 (CAAP1) from Bos taurus (Bovine).